Here is an 814-residue protein sequence, read N- to C-terminus: Rap guanine nucleotide exchange factor 5 (814 aa).

One can recognise a DEP domain in the interval 43–118 (LQAADLVKDR…DNYVFYQFSS (76 aa)). An N-terminal Ras-GEF domain is found at 301–434 (ARYVVVSGTP…ELKEFQKILG (134 aa)). The 236-residue stretch at 578 to 813 (NTWDLALELM…FELSHRLEPR (236 aa)) folds into the Ras-GEF domain.

The protein resides in the nucleus. Its function is as follows. Guanine nucleotide exchange factor (GEF) for RAP1A, RAP2A and MRAS/M-Ras-GTP. Its association with MRAS inhibits Rap1 activation. The polypeptide is Rap guanine nucleotide exchange factor 5 (Rapgef5) (Mus musculus (Mouse)).